The chain runs to 138 residues: ATP synthase epsilon chain (138 aa).

This sequence belongs to the ATPase epsilon chain family. In terms of assembly, F-type ATPases have 2 components, CF(1) - the catalytic core - and CF(0) - the membrane proton channel. CF(1) has five subunits: alpha(3), beta(3), gamma(1), delta(1), epsilon(1). CF(0) has three main subunits: a, b and c.

It is found in the cellular thylakoid membrane. In terms of biological role, produces ATP from ADP in the presence of a proton gradient across the membrane. The protein is ATP synthase epsilon chain of Cyanothece sp. (strain PCC 7425 / ATCC 29141).